We begin with the raw amino-acid sequence, 113 residues long: Iron-sulfur cluster insertion protein ErpA (113 aa).

Positions 41, 105, and 107 each coordinate iron-sulfur cluster.

The protein belongs to the HesB/IscA family. As to quaternary structure, homodimer. Requires iron-sulfur cluster as cofactor.

Its function is as follows. Required for insertion of 4Fe-4S clusters for at least IspG. The chain is Iron-sulfur cluster insertion protein ErpA from Actinobacillus pleuropneumoniae serotype 3 (strain JL03).